The sequence spans 179 residues: Sperm surface protein Sp17 (179 aa).

Residues 72-109 (HAFKDEPPEKSETQKIQPEKVAIEKETMPQETVKEKET) are compositionally biased toward basic and acidic residues. Disordered regions lie at residues 72–138 (HAFK…EGLL) and 159–179 (TRKEYLKKRDSTDETADENNE). Residues 116–135 (EPTEEPQKEEEEEEDEEDLE) are compositionally biased toward acidic residues. Residues 143–172 (MQDAAVKIQAVFRGHKTRKEYLKKRDSTDE) form the IQ domain. The span at 161 to 170 (KEYLKKRDST) shows a compositional bias: basic and acidic residues.

As to quaternary structure, homodimer. May interact with ROPN1. Testis- and sperm-specific.

Its subcellular location is the membrane. Sperm surface zona pellucida binding protein. Helps to bind spermatozoa to the zona pellucida with high affinity. Might function in binding zona pellucida and carbohydrates. The protein is Sperm surface protein Sp17 (SPA17) of Monodelphis domestica (Gray short-tailed opossum).